Consider the following 193-residue polypeptide: uncharacterized protein (193 aa).

Disordered stretches follow at residues 1–21, 53–96, and 114–136; these read MPKG…APPL, GAPA…PWPS, and SGPE…ASAS. Over residues 53 to 70 the composition is skewed to low complexity; sequence GAPAGGAPAAGGRSLPQG. Residues 71-95 show a composition bias toward pro residues; it reads PSAPAPPPPPGLGPPSERPCPPPWP. Low complexity predominate over residues 116 to 127; the sequence is PEAAASPLAPGP.

This is an uncharacterized protein from Bos taurus (Bovine).